The primary structure comprises 385 residues: Ethanolamine kinase 2 (385 aa).

This sequence belongs to the choline/ethanolamine kinase family. Expressed in testis and liver. Low expression in ovary and kidney.

It carries out the reaction ethanolamine + ATP = phosphoethanolamine + ADP + H(+). It participates in phospholipid metabolism; phosphatidylethanolamine biosynthesis; phosphatidylethanolamine from ethanolamine: step 1/3. Functionally, highly specific for ethanolamine phosphorylation. Does not have choline kinase activity. The chain is Ethanolamine kinase 2 (Etnk2) from Mus musculus (Mouse).